A 390-amino-acid chain; its full sequence is Nuclear receptor subfamily 2 group F member 6 (390 aa).

Residues 1–15 (MAMVTGGWGGPGGDT) show a composition bias toward gly residues. The interval 1-50 (MAMVTGGWGGPGGDTNGVDKAGGSYPRATEDDSASPPGATSDAEPGDEER) is disordered. Phosphoserine is present on residues serine 35 and serine 41. The segment at residues 54 to 129 (QVDCVVCGDK…VGMRKEAVQP (76 aa)) is a DNA-binding region (nuclear receptor). 2 consecutive NR C4-type zinc fingers follow at residues 57-77 (CVVC…CEGC) and 93-117 (CRSN…LKKC). An NR LBD domain is found at 157–380 (PVSELIAQLL…TLIRDMLLSG (224 aa)). The segment at 314–390 (LQEKAQVALT…STFNWPYGSG (77 aa)) is important for dimerization.

It belongs to the nuclear hormone receptor family. NR2 subfamily. In terms of assembly, binds DNA as dimer; homodimer and heterodimer with NR2F2 and probably NR2F1. Interacts with THRB.

The protein localises to the nucleus. Functionally, transcription factor predominantly involved in transcriptional repression. Binds to promoter/enhancer response elements that contain the imperfect 5'-AGGTCA-3' direct or inverted repeats with various spacings which are also recognized by other nuclear hormone receptors. Involved in modulation of hormonal responses. Represses transcriptional activity of the lutropin-choriogonadotropic hormone receptor/LHCGR gene, the renin/REN gene and the oxytocin-neurophysin/OXT gene. Represses the triiodothyronine-dependent and -independent transcriptional activity of the thyroid hormone receptor gene in a cell type-specific manner. The corepressing function towards thyroid hormone receptor beta/THRB involves at least in part the inhibition of THRB binding to triiodothyronine response elements (TREs) by NR2F6. Inhibits NFATC transcription factor DNA binding and subsequently its transcriptional activity. Acts as transcriptional repressor of IL-17 expression in Th-17 differentiated CD4(+) T cells and may be involved in induction and/or maintenance of peripheral immunological tolerance and autoimmunity. Involved in development of forebrain circadian clock; is required early in the development of the locus coeruleus (LC). The chain is Nuclear receptor subfamily 2 group F member 6 (Nr2f6) from Rattus norvegicus (Rat).